Reading from the N-terminus, the 222-residue chain is Cytidylate kinase (222 aa).

Glycine 9–threonine 17 contributes to the ATP binding site.

This sequence belongs to the cytidylate kinase family. Type 1 subfamily.

The protein resides in the cytoplasm. It catalyses the reaction CMP + ATP = CDP + ADP. The enzyme catalyses dCMP + ATP = dCDP + ADP. The chain is Cytidylate kinase from Thermodesulfovibrio yellowstonii (strain ATCC 51303 / DSM 11347 / YP87).